We begin with the raw amino-acid sequence, 230 residues long: Fibrillarin-like rRNA/tRNA 2'-O-methyltransferase (230 aa).

S-adenosyl-L-methionine-binding positions include 87–88 (TT), 105–106 (EF), 130–131 (DA), and 150–153 (DVAQ).

Belongs to the methyltransferase superfamily. Fibrillarin family. As to quaternary structure, interacts with nop5. Component of box C/D small ribonucleoprotein (sRNP) particles that contain rpl7ae, FlpA and nop5, plus a guide RNA.

In terms of biological role, involved in pre-rRNA and tRNA processing. Utilizes the methyl donor S-adenosyl-L-methionine to catalyze the site-specific 2'-hydroxyl methylation of ribose moieties in rRNA and tRNA. Site specificity is provided by a guide RNA that base pairs with the substrate. Methylation occurs at a characteristic distance from the sequence involved in base pairing with the guide RNA. This chain is Fibrillarin-like rRNA/tRNA 2'-O-methyltransferase, found in Methanococcus vannielii (strain ATCC 35089 / DSM 1224 / JCM 13029 / OCM 148 / SB).